A 271-amino-acid polypeptide reads, in one-letter code: Sec-independent protein translocase protein TatC (271 aa).

Transmembrane regions (helical) follow at residues 35–55, 93–113, 124–144, 178–198, 213–233, and 234–254; these read IIWT…WHEQ, AFIA…WLFI, YVLP…VFGY, IILG…LALM, SILV…IMNM, and CVFA…AFLV.

This sequence belongs to the TatC family. As to quaternary structure, forms a complex with TatA.

The protein resides in the cell inner membrane. In terms of biological role, part of the twin-arginine translocation (Tat) system that transports large folded proteins containing a characteristic twin-arginine motif in their signal peptide across membranes. This is Sec-independent protein translocase protein TatC from Koribacter versatilis (strain Ellin345).